A 125-amino-acid chain; its full sequence is Protein AC4 (125 aa).

The protein belongs to the geminiviridae protein AC4/C4 family.

Its function is as follows. Pathogenicity determinant. May act as a suppressor of RNA-mediated gene silencing, also known as post-transcriptional gene silencing (PTGS), a mechanism of plant viral defense that limits the accumulation of viral RNAs. This Cucurbita moschata (Winter crookneck squash) protein is Protein AC4.